The sequence spans 518 residues: Retinal dehydrogenase 2 (518 aa).

NAD(+) is bound by residues 184–186, 210–213, and 264–266; these read IPW, KPAE, and STE. The active-site Proton acceptor is Glu-286. Cys-320 acts as the Nucleophile in catalysis. Residues 366-370 and Glu-417 contribute to the NAD(+) site; that span reads KQYNK.

The protein belongs to the aldehyde dehydrogenase family. In terms of assembly, homotetramer.

It is found in the cytoplasm. It carries out the reaction retinal + NAD(+) + H2O = retinoate + NADH + 2 H(+). It catalyses the reaction all-trans-retinal + NAD(+) + H2O = all-trans-retinoate + NADH + 2 H(+). The enzyme catalyses all-trans-13,14-dihydroretinal + NAD(+) + H2O = all-trans-13,14-dihydroretinoate + NADH + 2 H(+). Its pathway is cofactor metabolism; retinol metabolism. In terms of biological role, catalyzes the NAD-dependent oxidation of aldehyde substrates, such as all-trans-retinal and all-trans-13,14-dihydroretinal, to their corresponding carboxylic acids, all-trans-retinoate and all-trans-13,14-dihydroretinoate, respectively. Retinoate signaling is critical for the transcriptional control of many genes, for instance it is crucial for initiation of meiosis in both male and female. Recognizes retinal as substrate, both in its free form and when bound to cellular retinol-binding protein. Lacks activity with benzaldehyde, acetaldehyde and octanal. Displays complete lack of activity with citral. The protein is Retinal dehydrogenase 2 (ALDH1A2) of Gallus gallus (Chicken).